Consider the following 509-residue polypeptide: 2,3-bisphosphoglycerate-independent phosphoglycerate mutase (509 aa).

The Mn(2+) site is built by D13 and S63. The active-site Phosphoserine intermediate is S63. Residues H124, 154–155 (RD), R186, R192, 261–264 (RPDR), and K335 contribute to the substrate site. Mn(2+) is bound by residues D400, H404, D441, H442, and H459.

This sequence belongs to the BPG-independent phosphoglycerate mutase family. Monomer. The cofactor is Mn(2+).

It catalyses the reaction (2R)-2-phosphoglycerate = (2R)-3-phosphoglycerate. It functions in the pathway carbohydrate degradation; glycolysis; pyruvate from D-glyceraldehyde 3-phosphate: step 3/5. Its function is as follows. Catalyzes the interconversion of 2-phosphoglycerate and 3-phosphoglycerate. The protein is 2,3-bisphosphoglycerate-independent phosphoglycerate mutase of Desulforudis audaxviator (strain MP104C).